A 177-amino-acid chain; its full sequence is Parathyroid hormone-related protein (177 aa).

An N-terminal signal peptide occupies residues 1–24 (MLRRLVQQWSVAVFLLSYSVPSCG). Residues 25–34 (RSVEGPGRRL) constitute a propeptide that is removed on maturation. The segment at 57–68 (RFFLHHLIAEIH) is important for receptor binding. Residues 74–177 (ATSEVSPNSK…PEPELDSRRH (104 aa)) are disordered. A compositionally biased stretch (polar residues) spans 76–90 (SEVSPNSKPAANTKN). A Nuclear localization signal motif is present at residues 108–129 (TNKVEPYKEQPLKTPGKKKKGK). A compositionally biased stretch (basic and acidic residues) spans 109–118 (NKVEPYKEQP). Positions 122-132 (PGKKKKGKPGK) are enriched in basic residues.

This sequence belongs to the parathyroid hormone family. In terms of assembly, PTHrP interacts with PTH1R (via N-terminal extracellular domain). There are several secretory forms, including osteostatin, arising from endoproteolytic cleavage of the initial translation product. Each of these secretory forms is believed to have one or more of its own receptors that mediates the normal paracrine, autocrine and endocrine actions.

Its subcellular location is the secreted. The protein localises to the cytoplasm. It is found in the nucleus. Functionally, neuroendocrine peptide which is a critical regulator of cellular and organ growth, development, migration, differentiation and survival and of epithelial calcium ion transport. Acts by binding to its receptor, PTH1R, activating G protein-coupled receptor signaling. Regulates endochondral bone development and epithelial-mesenchymal interactions during the formation of the mammary glands and teeth. Required for skeletal homeostasis. Promotes mammary mesenchyme differentiation and bud outgrowth by modulating mesenchymal cell responsiveness to BMPs. Up-regulates BMPR1A expression in the mammary mesenchyme and this increases the sensitivity of these cells to BMPs and allows them to respond to BMP4 in a paracrine and/or autocrine fashion. BMP4 signaling in the mesenchyme, in turn, triggers epithelial outgrowth and augments MSX2 expression, which causes the mammary mesenchyme to inhibit hair follicle formation within the nipple sheath. Potent inhibitor of osteoclastic bone resorption. The chain is Parathyroid hormone-related protein (PTHLH) from Oryctolagus cuniculus (Rabbit).